The sequence spans 395 residues: Phosphoglycerate kinase (395 aa).

Substrate is bound by residues 20–22 (DLN), R35, 58–61 (HFGR), R117, and R150. ATP contacts are provided by residues K200, E322, and 352–355 (GGDT).

Belongs to the phosphoglycerate kinase family. Monomer.

The protein localises to the cytoplasm. It carries out the reaction (2R)-3-phosphoglycerate + ATP = (2R)-3-phospho-glyceroyl phosphate + ADP. Its pathway is carbohydrate degradation; glycolysis; pyruvate from D-glyceraldehyde 3-phosphate: step 2/5. This is Phosphoglycerate kinase from Brucella suis biovar 1 (strain 1330).